The sequence spans 282 residues: ATP phosphoribosyltransferase (282 aa).

This sequence belongs to the ATP phosphoribosyltransferase family. Long subfamily. It depends on Mg(2+) as a cofactor.

It localises to the cytoplasm. The catalysed reaction is 1-(5-phospho-beta-D-ribosyl)-ATP + diphosphate = 5-phospho-alpha-D-ribose 1-diphosphate + ATP. It participates in amino-acid biosynthesis; L-histidine biosynthesis; L-histidine from 5-phospho-alpha-D-ribose 1-diphosphate: step 1/9. Feedback inhibited by histidine. Its function is as follows. Catalyzes the condensation of ATP and 5-phosphoribose 1-diphosphate to form N'-(5'-phosphoribosyl)-ATP (PR-ATP). Has a crucial role in the pathway because the rate of histidine biosynthesis seems to be controlled primarily by regulation of HisG enzymatic activity. This chain is ATP phosphoribosyltransferase, found in Micrococcus luteus (strain ATCC 4698 / DSM 20030 / JCM 1464 / CCM 169 / CCUG 5858 / IAM 1056 / NBRC 3333 / NCIMB 9278 / NCTC 2665 / VKM Ac-2230) (Micrococcus lysodeikticus).